The sequence spans 199 residues: Protein P1 (199 aa).

This is Protein P1 from Rice tungro bacilliform virus (isolate Philippines) (RTBV).